The following is a 245-amino-acid chain: tRNA pseudouridine synthase A (245 aa).

Aspartate 52 acts as the Nucleophile in catalysis. Residue tyrosine 111 coordinates substrate.

This sequence belongs to the tRNA pseudouridine synthase TruA family. As to quaternary structure, homodimer.

It catalyses the reaction uridine(38/39/40) in tRNA = pseudouridine(38/39/40) in tRNA. Formation of pseudouridine at positions 38, 39 and 40 in the anticodon stem and loop of transfer RNAs. This is tRNA pseudouridine synthase A from Nitrobacter hamburgensis (strain DSM 10229 / NCIMB 13809 / X14).